The following is a 971-amino-acid chain: Mating-type switching protein swi1 (971 aa).

Residues serine 528, serine 536, and serine 970 each carry the phosphoserine modification.

As to quaternary structure, fork protection complex (FPC) consisting of swi1 and swi3 interacts with mat1 cis-acting sequences and mat1-proximal polar-terminator of replication (RTS1).

It is found in the nucleus. Functionally, forms a fork protection complex (FPC) with swi3. FPC coordinates leading and lagging strand synthesis and moves with the replication fork. It is required for programmed fork-pausing which is necessary for mating-type switching. FPC stabilizes replication forks in a configuration that is recognized by replication checkpoint sensors. It is involved in termination at the mat1-proximal polar-terminator of replication (RTS1) and also required for activation of the Rad53-like checkpoint kinase cds1. The polypeptide is Mating-type switching protein swi1 (swi1) (Schizosaccharomyces pombe (strain 972 / ATCC 24843) (Fission yeast)).